We begin with the raw amino-acid sequence, 558 residues long: Poly(A) polymerase PAPalpha (558 aa).

A compositionally biased stretch (polar residues) spans 1–17; that stretch reads MNTKTYGVTEPISTNGP. A disordered region spans residues 1-20; it reads MNTKTYGVTEPISTNGPTPK. Residues 86-88, 99-101, aspartate 153, lysine 214, tyrosine 223, and 232-233 each bind ATP; these read FGS, DID, and GV. Mg(2+)-binding residues include aspartate 99, aspartate 101, and aspartate 153. Residues 516-558 are disordered; that stretch reads VYEDGEERPKKSGKKRKKVIKEDGQKRVRNESPASSASVNGSS. Residues 535–545 are compositionally biased toward basic and acidic residues; sequence IKEDGQKRVRN. Over residues 547–558 the composition is skewed to low complexity; the sequence is SPASSASVNGSS.

The protein belongs to the poly(A) polymerase family. It depends on Mg(2+) as a cofactor. The cofactor is Mn(2+).

The protein resides in the nucleus. The enzyme catalyses RNA(n) + ATP = RNA(n)-3'-adenine ribonucleotide + diphosphate. Polymerase that creates the 3'-poly(A) tail of mRNA's. May acquire specificity through interaction with a cleavage and polyadenylation factor. The chain is Poly(A) polymerase PAPalpha (PAPALPHA) from Candida albicans (strain SC5314 / ATCC MYA-2876) (Yeast).